The chain runs to 91 residues: MSFFTMCVLAAGIGMALGTLGTGIGQGLAVKSAVEGVSRNPGASGKILTTMMIGLAMIESLAIYALVVCLIILFANPYKDIALELAKTVAK.

2 helical membrane-spanning segments follow: residues 4–24 and 53–73; these read FTMCVLAAGIGMALGTLGTGI and IGLAMIESLAIYALVVCLIIL.

It belongs to the ATPase C chain family. As to quaternary structure, F-type ATPases have 2 components, F(1) - the catalytic core - and F(0) - the membrane proton channel. F(1) has five subunits: alpha(3), beta(3), gamma(1), delta(1), epsilon(1). F(0) has three main subunits: a(1), b(2) and c(10-14). The alpha and beta chains form an alternating ring which encloses part of the gamma chain. F(1) is attached to F(0) by a central stalk formed by the gamma and epsilon chains, while a peripheral stalk is formed by the delta and b chains.

The protein localises to the cell inner membrane. Its function is as follows. F(1)F(0) ATP synthase produces ATP from ADP in the presence of a proton or sodium gradient. F-type ATPases consist of two structural domains, F(1) containing the extramembraneous catalytic core and F(0) containing the membrane proton channel, linked together by a central stalk and a peripheral stalk. During catalysis, ATP synthesis in the catalytic domain of F(1) is coupled via a rotary mechanism of the central stalk subunits to proton translocation. Functionally, key component of the F(0) channel; it plays a direct role in translocation across the membrane. A homomeric c-ring of between 10-14 subunits forms the central stalk rotor element with the F(1) delta and epsilon subunits. This is ATP synthase subunit c from Geotalea daltonii (strain DSM 22248 / JCM 15807 / FRC-32) (Geobacter daltonii).